Reading from the N-terminus, the 461-residue chain is MEDLDALLSDLETTTSHMPRSGAPKERPAEPLTPPPSYGHQPQTGSGESSGASGDKDHLYSTVCKPRSPKPAAPAAPPFSSSSGVLGTGLCELDRLLQELNATQFNITDEIMSQFPSSKVASGEQKEDQSEDKKRPSLPSSPSPGLPKASATSATLELDRLMASLSDFRVQNHLPASGPTQPPVVSSTNEGSPSPPEPTGKGSLDTMLGLLQSDLSRRGVPTQAKGLCGSCNKPIAGQVVTALGRAWHPEHFVCGGCSTALGGSSFFEKDGAPFCPECYFERFSPRCGFCNQPIRHKMVTALGTHWHPEHFCCVSCGEPFGDEGFHEREGRPYCRRDFLQLFAPRCQGCQGPILDNYISALSALWHPDCFVCRECFAPFSGGSFFEHEGRPLCENHFHARRGSLCATCGLPVTGRCVSALGRRFHPDHFTCTFCLRPLTKGSFQERAGKPYCQPCFLKLFG.

Methionine 1 is subject to N-acetylmethionine. The segment at 1 to 87 (MEDLDALLSD…PFSSSSGVLG (87 aa)) is disordered. The segment at 1 to 200 (MEDLDALLSD…GSPSPPEPTG (200 aa)) is transcription activation. The interval 1–240 (MEDLDALLSD…CNKPIAGQVV (240 aa)) is interaction with PTK2B/PYK2. The short motif at 3-15 (DLDALLSDLETTT) is the LD motif 1 element. Position 33 is a phosphothreonine (threonine 33). Tyrosine 38 carries the post-translational modification Phosphotyrosine. The span at 40–52 (HQPQTGSGESSGA) shows a compositional bias: polar residues. Tyrosine 60 bears the Phosphotyrosine; by FAK2 and FYN mark. Position 68 is a phosphoserine (serine 68). An interaction with PTK2/FAK1 region spans residues 83–136 (SGVLGTGLCELDRLLQELNATQFNITDEIMSQFPSSKVASGEQKEDQSEDKKRP). Residues 92–104 (ELDRLLQELNATQ) carry the LD motif 2 motif. Residues 116 to 152 (PSSKVASGEQKEDQSEDKKRPSLPSSPSPGLPKASAT) are disordered. Positions 124–135 (EQKEDQSEDKKR) are enriched in basic and acidic residues. Phosphoserine occurs at positions 137, 140, 141, 143, 164, and 186. Residues 157-168 (ELDRLMASLSDF) carry the LD motif 3 motif. The disordered stretch occupies residues 172–205 (NHLPASGPTQPPVVSSTNEGSPSPPEPTGKGSLD). A compositionally biased stretch (polar residues) spans 183–192 (PVVSSTNEGS). Threonine 188 bears the Phosphothreonine mark. Phosphoserine occurs at positions 192 and 194. Positions 203–215 (SLDTMLGLLQSDL) match the LD motif 4 motif. LIM zinc-binding domains follow at residues 226-285 (GLCG…RFSP), 286-343 (RCGF…QLFA), 344-403 (PRCQ…RRGS), and 404-461 (LCAT…KLFG). The residue at position 403 (serine 403) is a Phosphoserine. Threonine 407 bears the Phosphothreonine mark.

Belongs to the paxillin family. In terms of assembly, homooligomer. Interacts with PPARG. Interacts with TRAF4. Interacts with CRIP2. Interacts with HSPB1. Interacts with ILK. Interacts with LIMS1 and LIMS2. Interacts with NCK2. Interacts with NUDT16L1. Interacts with PAK. Interacts with PTPN12. Interacts with TCF3. Interacts with TCF7L2. Interacts with VCL. Interacts (via LD motif 3) with GIT1. Also interacts with GIT2. Forms a complex with ARHGEF7. Interacts with AR/androgen receptor in a ligand-dependent manner. Interacts with CSK. Interacts with PTK2/FAK1 and PTK2B/PYK2. Interacts with SLC6A3 and SLC6A4. Interacts with NR3C1. Interacts with SMAD3. Interacts with MAPK15. Interacts with SRC. Interacts with LYN. Interacts with talin. Interacts (via LIM zinc-binding domain 2) with CBLC (via RING-type zinc finger); the interaction is direct and enhances CBLC E3 ubiquitin-protein ligase activity. Interacts with PARVA. Interacts with PXN. In terms of processing, phosphorylated by gonadotropin-releasing hormone-activated SRC. Expressed in platelets, smooth muscle and prostate stromal cells (at protein level).

It is found in the cell junction. Its subcellular location is the focal adhesion. The protein localises to the nucleus matrix. It localises to the cytoplasm. The protein resides in the cytoskeleton. In terms of biological role, functions as a molecular adapter coordinating multiple protein-protein interactions at the focal adhesion complex and in the nucleus. Links various intracellular signaling modules to plasma membrane receptors and regulates the Wnt and TGFB signaling pathways. May also regulate SLC6A3 and SLC6A4 targeting to the plasma membrane hence regulating their activity. In the nucleus, functions as a nuclear receptor coactivator regulating glucocorticoid, androgen, mineralocorticoid and progesterone receptor transcriptional activity. May play a role in the processes of cell growth, proliferation, migration, differentiation and senescence. May have a zinc-dependent DNA-binding activity. The polypeptide is Transforming growth factor beta-1-induced transcript 1 protein (TGFB1I1) (Homo sapiens (Human)).